The sequence spans 265 residues: Mlc titration factor A (265 aa).

The Zn(2+) site is built by H111, H148, H152, and E211.

The protein belongs to the MtfA family. As to quaternary structure, interacts with Mlc. The cofactor is Zn(2+).

It is found in the cytoplasm. Its function is as follows. Involved in the modulation of the activity of the glucose-phosphotransferase system (glucose-PTS). Interacts with the transcriptional repressor Mlc, preventing its interaction with DNA and leading to the modulation of expression of genes regulated by Mlc, including ptsG, which encodes the PTS system glucose-specific EIICB component. In terms of biological role, shows zinc-dependent metallopeptidase activity. In Escherichia fergusonii, this protein is Mlc titration factor A.